Reading from the N-terminus, the 368-residue chain is Propane 2-monooxygenase, hydroxylase component small subunit (368 aa).

The protein belongs to the TmoE/XamoE family. The propane 2-monooxygenase multicomponent enzyme system is composed of an electron transfer component and a monooxygenase component interacting with the effector protein PrmD. The electron transfer component is composed of a reductase (PrmB), and the monooxygenase component is formed by a large subunit (PrmA) and a small subunit (PrmC). Probably requires the presence of the chaperonin-like protein PrmG to ensure a productive folding, resulting of a soluble PrmC, which leads to the active form of PrmABCD.

The enzyme catalyses propane + NADH + O2 + H(+) = propan-2-ol + NAD(+) + H2O. Its function is as follows. Component of the propane 2-monooxygenase multicomponent enzyme system which is involved in the degradation of propane via the O2-dependent hydroxylation of propane. Also able to catalyze the oxidation the water contaminant N-nitrosodimethylamine (NDMA). This chain is Propane 2-monooxygenase, hydroxylase component small subunit, found in Rhodococcus jostii (strain RHA1).